A 161-amino-acid polypeptide reads, in one-letter code: N5-carboxyaminoimidazole ribonucleotide mutase (161 aa).

Substrate contacts are provided by Ser9, Asp12, and Arg39.

This sequence belongs to the AIR carboxylase family. Class I subfamily.

The catalysed reaction is 5-carboxyamino-1-(5-phospho-D-ribosyl)imidazole + H(+) = 5-amino-1-(5-phospho-D-ribosyl)imidazole-4-carboxylate. It functions in the pathway purine metabolism; IMP biosynthesis via de novo pathway; 5-amino-1-(5-phospho-D-ribosyl)imidazole-4-carboxylate from 5-amino-1-(5-phospho-D-ribosyl)imidazole (N5-CAIR route): step 2/2. Functionally, catalyzes the conversion of N5-carboxyaminoimidazole ribonucleotide (N5-CAIR) to 4-carboxy-5-aminoimidazole ribonucleotide (CAIR). The sequence is that of N5-carboxyaminoimidazole ribonucleotide mutase from Vibrio parahaemolyticus serotype O3:K6 (strain RIMD 2210633).